The chain runs to 258 residues: Aspartate/glutamate leucyltransferase (258 aa).

It belongs to the R-transferase family. Bpt subfamily.

The protein localises to the cytoplasm. The enzyme catalyses N-terminal L-glutamyl-[protein] + L-leucyl-tRNA(Leu) = N-terminal L-leucyl-L-glutamyl-[protein] + tRNA(Leu) + H(+). The catalysed reaction is N-terminal L-aspartyl-[protein] + L-leucyl-tRNA(Leu) = N-terminal L-leucyl-L-aspartyl-[protein] + tRNA(Leu) + H(+). Functions in the N-end rule pathway of protein degradation where it conjugates Leu from its aminoacyl-tRNA to the N-termini of proteins containing an N-terminal aspartate or glutamate. This Rhodopseudomonas palustris (strain ATCC BAA-98 / CGA009) protein is Aspartate/glutamate leucyltransferase.